The primary structure comprises 1152 residues: MRTKKAFLLLTFNVLIYLAACQETERILANNGTEDNEITTSKGVSPNTNPLFLSNSTAGLYDSKGRIRLTIGHIGAIGALRNDVKILEVSHKALQAEGILDDDLDVEIISQTGCGESYEGVAVAADMYHLQKVKAFIGPYCNAEMDAVARMAAFWNIPIIGYMAASNNLADKNAYPTLARISLRTTNSIAEATCAMLRHYGWNKVAIITNTGILAYDRVLSFEEVFHQRGINVVKKIMFDEFADSKAMIASGLLNDIKNSARIVVCLFSNTRESSREFLTAANTQGMNVNEYGYVFPWLQDGGKDASPWTGADGSMLQKVKDQYANAIIIDDVNSFDNTIVGPFIERIKDVGLTEADVDIANIYGYLYLFDALKLYAIAARKVLNETGKAENLLNGRMMWQNMRKLKFVGMVGASGIASGQVSMDDRAERAPLYRGFFVSPNSDSVLPMVHMEPTMLDNCDGIANKSGCYEIVVTDIMRDFWPSVDRKMPKDEPDCGYRNERCDYTLIIIGAALILLFIVAAVSAFFAQKILEKRALDKLPFRIYRDDLQFIDEEQLKSMLSLGSTRTKMSNMNYGSRNHAIVGTNTHAIYHKYVQRRPIVFNRADKTLIQLMKAAVHDNINPFLGMVWNEREEMLLVWKFCSRGTLQDIIYNESIQLDTKFHGAFIRDILAGLEYLHASQIGYHGSLTPWSCLIDRNWMIKLTDYGIADPLERWEKSQSISRDGLTSDDDKSQATQATSILYESPEMLKNREKNRVRRVDQDWMRQTQTRRQLGDVYAFGLVMYEIIFRALPFPEGTNQSELVEWLRDGSKVVKPTIPQNKVLNMDLSALIQDCWNTTPEMRPSLRRIKLNVETYLNIKGSLVDQMTRMMEQYANNLEKLVAERTGMLEEANQRADRLLSQLLPAYVANELKLGRPVPPKTFTSSTVLFSDIVGFTEMCQNASPLEVVAVLNGIFDGFDQFIARKDAYKVETIGDAYMVVSGVPEENGHRHINEIASIALDVHKFLSEFIVPHKRDTKVQCRLGFHTGPVAAAVVGLNAPRYCLFGDTVNMASRMESNSEPGKTQISETAKNLLLKEYPDYICEQRGEIPIKGKGLCMTYWLMGTKSEGSGRSGAYLAPSMKSAGTGFTGMLGNSANDYSLNLKNPTGLQR.

An N-terminal signal peptide occupies residues 1–21 (MRTKKAFLLLTFNVLIYLAAC). The Extracellular segment spans residues 22–506 (QETERILANN…GYRNERCDYT (485 aa)). N-linked (GlcNAc...) asparagine glycans are attached at residues Asn-31, Asn-55, Asn-385, and Asn-465. Residues 507–527 (LIIIGAALILLFIVAAVSAFF) form a helical membrane-spanning segment. Residues 528–1152 (AQKILEKRAL…NLKNPTGLQR (625 aa)) lie on the Cytoplasmic side of the membrane. Residues 567 to 857 (RTKMSNMNYG…RIKLNVETYL (291 aa)) form the Protein kinase domain. Residues 573 to 581 (MNYGSRNHA) and Lys-593 contribute to the ATP site. Positions 861 to 899 (GSLVDQMTRMMEQYANNLEKLVAERTGMLEEANQRADRL) form a coiled coil. In terms of domain architecture, Guanylate cyclase spans 927–1057 (TVLFSDIVGF…DTVNMASRME (131 aa)). 3 residues coordinate Mg(2+): Asp-932, Ile-933, and Asp-976.

Belongs to the adenylyl cyclase class-4/guanylyl cyclase family. As to expression, expressed bilaterally in AFD sensory neurons.

Its subcellular location is the cell membrane. It localises to the cell projection. The protein localises to the cilium. It catalyses the reaction GTP = 3',5'-cyclic GMP + diphosphate. Inhibited by chloride with an IC(50) of 60 mM. Guanylate cyclase involved in the production of the second messenger cGMP. Regulates thermotaxis responses in AFD sensory neurons. May regulate AFD neuronal activity such as calcium responses to temperature gradients. Maintains the microvilli receptive ending morphology of the AFD thermosensory neurons by regulating cGMP levels downstream of kcc-3. cGMP levels antagonize the actin cytoskeleton regulator wsp-1. This is Receptor-type guanylate cyclase gcy-8 from Caenorhabditis elegans.